Reading from the N-terminus, the 819-residue chain is Tegument protein UL47 homolog (819 aa).

Over residues 1–15 the composition is skewed to basic residues; it reads MQSGHYNRRQSRRQR. 2 disordered regions span residues 1 to 42 and 58 to 221; these read MQSG…THPP and LNSE…DYFS. The short motif at 11-31 is the Nuclear localization signal element; the sequence is SRRQRISSNTTDSPRHTHGTR. The segment covering 32–42 has biased composition (polar residues); it reads YRSTNWYTHPP. The segment covering 62–72 has biased composition (acidic residues); the sequence is MDQDSSSDASD. Polar residues predominate over residues 82-93; the sequence is STYNGSEQNTST. Basic and acidic residues predominate over residues 94–109; the sequence is SRHENRIFKLTEREAN. Tandem repeats lie at residues 117 to 132, 133 to 148, 149 to 164, 165 to 190, and 191 to 206. Positions 117–218 are 6 X 16 AA approximate tandem repeats; that stretch reads DAIDDEGEAE…IDDEGEAEED (102 aa). The span at 118–219 shows a compositional bias: acidic residues; that stretch reads AIDDEGEAEE…DDEGEAEEDY (102 aa). One copy of the 1-6; truncated repeat lies at 207 to 218; it reads DAIDDEGEAEED. Positions 785-807 match the Nuclear export signal motif; sequence QPIPSVDLAENLMQYRNEILGLD.

The protein belongs to the alphaherpesvirinae HHV-1 UL47 family. Interacts with US3 kinase. Interacts with ORF24 and ORF27; these interactions seem important for efficient virion nuclear egress. Interacts with ORF17/VHS. Interacts with ORF9. Phosphorylated by US3. This phosphorylation is required for proper nuclear localization.

It is found in the virion tegument. Its subcellular location is the host nucleus. The protein resides in the host cytoplasm. Its function is as follows. Tegument protein that can bind to various RNA transcripts. Plays a role in the attenuation of selective viral and cellular mRNA degradation by modulating the activity of host shutoff RNase ORF17/VHS. Also plays a role in the primary envelopment of virions in the perinuclear space, probably by interacting with two nuclear egress proteins ORF24 and ORF27. The chain is Tegument protein UL47 homolog from Varicella-zoster virus (strain Dumas) (HHV-3).